A 181-amino-acid polypeptide reads, in one-letter code: ATP synthase subunit b, chloroplastic (181 aa).

A helical membrane pass occupies residues 28-50 (IINLSVVLGVLIYFGKGVLSNLL).

The protein belongs to the ATPase B chain family. As to quaternary structure, F-type ATPases have 2 components, F(1) - the catalytic core - and F(0) - the membrane proton channel. F(1) has five subunits: alpha(3), beta(3), gamma(1), delta(1), epsilon(1). F(0) has four main subunits: a(1), b(1), b'(1) and c(10-14). The alpha and beta chains form an alternating ring which encloses part of the gamma chain. F(1) is attached to F(0) by a central stalk formed by the gamma and epsilon chains, while a peripheral stalk is formed by the delta, b and b' chains.

Its subcellular location is the plastid. The protein localises to the chloroplast thylakoid membrane. Functionally, f(1)F(0) ATP synthase produces ATP from ADP in the presence of a proton or sodium gradient. F-type ATPases consist of two structural domains, F(1) containing the extramembraneous catalytic core and F(0) containing the membrane proton channel, linked together by a central stalk and a peripheral stalk. During catalysis, ATP synthesis in the catalytic domain of F(1) is coupled via a rotary mechanism of the central stalk subunits to proton translocation. Its function is as follows. Component of the F(0) channel, it forms part of the peripheral stalk, linking F(1) to F(0). This Cryptomeria japonica (Japanese cedar) protein is ATP synthase subunit b, chloroplastic.